Consider the following 307-residue polypeptide: uncharacterized protein (307 aa).

The signal sequence occupies residues 1–25 (MKFQKRNIQLVLILLLILNNCFINS). The disordered stretch occupies residues 60-90 (ENNNKNNNNNNNNNNNNNNNNKNSKVKNDDS). A compositionally biased stretch (low complexity) spans 63 to 82 (NKNNNNNNNNNNNNNNNNKN). N-linked (GlcNAc...) asparagine glycans are attached at residues N124 and N173. The next 2 helical transmembrane spans lie at 244 to 264 (IIFA…YYLA) and 275 to 295 (IIGV…TIVI).

It localises to the membrane. This is an uncharacterized protein from Dictyostelium discoideum (Social amoeba).